The following is a 95-amino-acid chain: Integration host factor subunit beta (95 aa).

Belongs to the bacterial histone-like protein family. Heterodimer of an alpha and a beta chain.

This protein is one of the two subunits of integration host factor, a specific DNA-binding protein that functions in genetic recombination as well as in transcriptional and translational control. The polypeptide is Integration host factor subunit beta (Ruegeria sp. (strain TM1040) (Silicibacter sp.)).